Consider the following 188-residue polypeptide: Elongation factor P (188 aa).

An N6-(3,6-diaminohexanoyl)-5-hydroxylysine modification is found at lysine 34.

The protein belongs to the elongation factor P family. Post-translationally, may be beta-lysylated on the epsilon-amino group of Lys-34 by the combined action of EpmA and EpmB, and then hydroxylated on the C5 position of the same residue by EpmC (if this protein is present). Lysylation is critical for the stimulatory effect of EF-P on peptide-bond formation. The lysylation moiety may extend toward the peptidyltransferase center and stabilize the terminal 3-CCA end of the tRNA. Hydroxylation of the C5 position on Lys-34 may allow additional potential stabilizing hydrogen-bond interactions with the P-tRNA.

It is found in the cytoplasm. The protein operates within protein biosynthesis; polypeptide chain elongation. Functionally, involved in peptide bond synthesis. Alleviates ribosome stalling that occurs when 3 or more consecutive Pro residues or the sequence PPG is present in a protein, possibly by augmenting the peptidyl transferase activity of the ribosome. Modification of Lys-34 is required for alleviation. This Haemophilus influenzae (strain PittGG) protein is Elongation factor P.